The sequence spans 441 residues: Xaa-Pro dipeptidase (441 aa).

Residues Asp244, Asp255, His336, Glu381, and Glu420 each contribute to the Mn(2+) site.

This sequence belongs to the peptidase M24B family. Bacterial-type prolidase subfamily. Mn(2+) is required as a cofactor.

The enzyme catalyses Xaa-L-Pro dipeptide + H2O = an L-alpha-amino acid + L-proline. Functionally, splits dipeptides with a prolyl residue in the C-terminal position. This Xanthomonas euvesicatoria pv. vesicatoria (strain 85-10) (Xanthomonas campestris pv. vesicatoria) protein is Xaa-Pro dipeptidase.